The following is a 286-amino-acid chain: Undecaprenyl-diphosphatase (286 aa).

The next 7 helical transmembrane spans lie at 50-70, 97-117, 126-146, 156-176, 200-220, 236-256, and 264-284; these read GAAF…VYFW, MGWL…IFQD, LWIV…ADAV, LTYK…IPGV, SFLL…YKVM, LATL…LKFV, and FVWY…FNVI.

Belongs to the UppP family.

It is found in the cell membrane. The enzyme catalyses di-trans,octa-cis-undecaprenyl diphosphate + H2O = di-trans,octa-cis-undecaprenyl phosphate + phosphate + H(+). Its function is as follows. Catalyzes the dephosphorylation of undecaprenyl diphosphate (UPP). Confers resistance to bacitracin. This chain is Undecaprenyl-diphosphatase, found in Arthrobacter sp. (strain FB24).